The chain runs to 45 residues: MTKRTFGGTSRKRKRVSGFRVRMRNHTGRRVIRSRRKRGRARLAV.

This sequence belongs to the bacterial ribosomal protein bL34 family.

The polypeptide is Large ribosomal subunit protein bL34 (Prochlorococcus marinus (strain MIT 9313)).